The chain runs to 427 residues: GTPase Obg (427 aa).

Positions 1–158 constitute an Obg domain; it reads MFVDIAKIYV…LWVILELKVL (158 aa). One can recognise an OBG-type G domain in the interval 159-330; sequence ADVGLIGYPN…VLKRAYELLK (172 aa). Residues 165 to 172, 190 to 194, 212 to 215, 282 to 285, and 311 to 313 each bind GTP; these read GYPNVGKS, FTTKY, DIPG, NKMD, and SAA. Mg(2+) contacts are provided by Ser-172 and Thr-192. The region spanning 347–427 is the OCT domain; sequence FVYYKKKDVK…ILDVEFEYYE (81 aa).

This sequence belongs to the TRAFAC class OBG-HflX-like GTPase superfamily. OBG GTPase family. In terms of assembly, monomer. The cofactor is Mg(2+).

It is found in the cytoplasm. In terms of biological role, an essential GTPase which binds GTP, GDP and possibly (p)ppGpp with moderate affinity, with high nucleotide exchange rates and a fairly low GTP hydrolysis rate. Plays a role in control of the cell cycle, stress response, ribosome biogenesis and in those bacteria that undergo differentiation, in morphogenesis control. This is GTPase Obg from Caldicellulosiruptor bescii (strain ATCC BAA-1888 / DSM 6725 / KCTC 15123 / Z-1320) (Anaerocellum thermophilum).